Consider the following 440-residue polypeptide: Branched-chain amino acid permease BrnQ (440 aa).

12 helical membrane passes run 9–29 (YIIIIGLMLFALFFGAGNLIF), 46–66 (AGFLVTGVGLPLLAITAFVFS), 80–100 (PVFGIVFTTILYLAIGPFFAI), 121–141 (SPVSLIIFTILFFALACLLSL), 149–169 (IVGKFLTPIKLTFIGLLVAVA), 196–216 (GYLTLDALVAFVFGIIIVNAL), 227–247 (LIVVCAKAAAIAAVLLAVMYT), 284–304 (ILLGLMITVACLTTSVGLITA), 321–341 (IAVVLSVFSTLVANIGLTQLI), 348–368 (LLTMYPIAISLIFLTFLHSVF), 378–398 (SLLFAFIISLFDGLKAAGIKI), and 414–434 (IGLGWLIPAIAGGICGYILSI).

It belongs to the branched chain amino acid transporter family.

The protein resides in the cell membrane. Its function is as follows. Branched-chain amino acid transport system which is involved in the uptake of isoleucine and valine. Probably does not transport leucine. Together with BcaP and BraB, plays an important role in the activation of CodY, a branched-chain amino acid-responsive transcriptional regulator that controls the expression of several dozen transcription units in B.subtilis. This chain is Branched-chain amino acid permease BrnQ, found in Bacillus subtilis (strain 168).